A 621-amino-acid polypeptide reads, in one-letter code: E3 SUMO-protein ligase PIAS2 (621 aa).

In terms of domain architecture, SAP spans 11-45 (VSSFRVSELQVLLGFAGRNKSGRKHDLLMRALHLL). The LXXLL motif motif lies at 19–23 (LQVLL). Residues Lys46 and Lys249 each participate in a glycyl lysine isopeptide (Lys-Gly) (interchain with G-Cter in SUMO2) cross-link. The 166-residue stretch at 134-299 (QPSPPIPPVH…SMSVYLVRQL (166 aa)) folds into the PINIT domain. Residues 331 to 412 (PDSEIATTSL…FMEILNDCSD (82 aa)) form an SP-RING-type zinc finger. Positions 362, 364, 385, and 388 each coordinate Zn(2+). Residues Lys430, Lys435, Lys443, and Lys452 each participate in a glycyl lysine isopeptide (Lys-Gly) (interchain with G-Cter in SUMO2) cross-link. Positions 467–473 (IDVIDLT) are SUMO1-binding. Ser476, Ser477, and Ser478 each carry phosphoserine. The Nuclear localization signal motif lies at 484 to 492 (PPAKRKCIF). Residue Lys489 forms a Glycyl lysine isopeptide (Lys-Gly) (interchain with G-Cter in SUMO2) linkage. Ser499 carries the phosphoserine modification. Lys502 participates in a covalent cross-link: Glycyl lysine isopeptide (Lys-Gly) (interchain with G-Cter in SUMO2). Residues 577–610 (TASSTSVTTTSPHESSTHVSSSSSRSETGVITSS) are compositionally biased toward low complexity. The interval 577–621 (TASSTSVTTTSPHESSTHVSSSSSRSETGVITSSGRNIPDIISLD) is disordered.

It belongs to the PIAS family. As to quaternary structure, binds SUMO1 and UBE2I. Interacts with AXIN1, JUN, MDM2, PARK7, TP53 and TP73 isoform alpha, but not TP73 isoform beta. Interacts with STAT4 following IL12 and IFN-alpha stimulation of T-cells. Interacts also with GTF2I, GTF2IRD1, IKFZ1, DAB2 and MSX2, as well as with several steroid receptors, including ESR1, ESR2, NR3C1, PGR, AR, and with NCOA2. Sumoylation of a target protein seems to enhance the interaction. Binds to sumoylated ELK1. Interacts with PLAG1. Binds DNA, such as CDKN1A promoter, in a sequence-specific manner. Interacts with KLF8; the interaction results in SUMO ligation and repression of KLF8 transcriptional activity and of its cell cycle progression into G(1) phase. Interacts with IFIH1/MDA5. Interacts with PML. Interacts with PRDM1. Post-translationally, sumoylated.

The protein resides in the nucleus speckle. The protein localises to the nucleus. It is found in the PML body. It carries out the reaction S-ubiquitinyl-[E2 ubiquitin-conjugating enzyme]-L-cysteine + [acceptor protein]-L-lysine = [E2 ubiquitin-conjugating enzyme]-L-cysteine + N(6)-ubiquitinyl-[acceptor protein]-L-lysine.. It participates in protein modification; protein sumoylation. Its function is as follows. Functions as an E3-type small ubiquitin-like modifier (SUMO) ligase, stabilizing the interaction between UBE2I and the substrate, and as a SUMO-tethering factor. Plays a crucial role as a transcriptional coregulation in various cellular pathways, including the STAT pathway, the p53 pathway and the steroid hormone signaling pathway. The effects of this transcriptional coregulation, transactivation or silencing may vary depending upon the biological context and PIAS2 isoform studied. However, it seems to be mostly involved in gene silencing. Binds to sumoylated ELK1 and enhances its transcriptional activity by preventing recruitment of HDAC2 by ELK1, thus reversing SUMO-mediated repression of ELK1 transactivation activity. Isoform PIASx-beta, but not isoform PIASx-alpha, promotes MDM2 sumoylation. Isoform PIASx-alpha promotes PARK7 sumoylation. Isoform PIASx-beta promotes NCOA2 sumoylation more efficiently than isoform PIASx-alpha. Sumoylates PML at'Lys-65' and 'Lys-160'. The sequence is that of E3 SUMO-protein ligase PIAS2 (Pias2) from Mus musculus (Mouse).